Reading from the N-terminus, the 511-residue chain is mRNA export factor (511 aa).

Residues 1–15 show a composition bias toward low complexity; it reads MATDIDMLIDLGLDL. The interval 1-244 is disordered; sequence MATDIDMLID…ERKAPAADTI (244 aa). Positions 5-17 match the Nuclear export signal motif; it reads IDMLIDLGLDLSD. 2 positions are modified to phosphoserine; by host: Ser-16 and Ser-18. Composition is skewed to acidic residues over residues 16–26 and 35–51; these read SDSDLDEDPPE and LESD…EDME. The interval 104–112 is interaction with host ALYREF; sequence VWSRLGARR. Positions 110-138 match the Nuclear localization signal motif; the sequence is ARRPSCSPEQHGGKVARLQPPPTKAQPAR. Ser-114 carries the post-translational modification Phosphoserine; by host. Position 138 is a dimethylated arginine; by host (Arg-138). The tract at residues 138 to 152 is RGG-box; sequence RGGRRGRRRGRGRGG. A compositionally biased stretch (basic residues) spans 139 to 149; the sequence is GGRRGRRRGRG. An Omega-N-methylarginine; by host modification is found at Arg-148. Arg-150 is modified (dimethylated arginine; by host). Over residues 213-232 the composition is skewed to pro residues; that stretch reads APPPLMTLAIAPPPADPRAP. Zn(2+) contacts are provided by Cys-399, His-478, Cys-482, and Cys-487. The segment at 399–487 adopts a CHC2-type zinc-finger fold; sequence CYLKARGLCG…HRQECSSRVC (89 aa).

The protein belongs to the HHV-1 ICP27 protein family. In terms of assembly, interacts with host RBP1; this interaction facilitates the RNA polymerase recruitment to viral transcription sites. Interacts (via the RGG box) with host ALYREF/THOC4; this interaction recruits ALYREF to viral replication compartments and probably directs viral mRNA to the TAP/NFX1 pathway. Interacts (via the RGG box) with host SRPK1; this interaction relocalizes SRPK1 to the nucleus and seems to alter its activity. Interacts with ICP4; this interaction modulates ICP4 DNA-binding activity. Interacts with host NXF1; this interaction allows efficient export of HSV-1 early and late transcripts. Post-translationally, methylated within the RGG box possibly by host PRMT1. When hypomethylated, ICP27 is exported to the cytoplasm earlier and more rapidly. Phosphorylated.

Its subcellular location is the host cytoplasm. The protein localises to the host nucleus. Its function is as follows. Multifunctional regulator of the expression of viral genes that contributes to the shutoff of host protein synthesis and mediates nuclear export of viral intronless mRNAs. Early in infection, this immediate early (EI) protein mediates the inhibition of cellular splicing. This results in the accumulation of unprocessed 3'end pre-mRNAs which can't be exported from the nucleus. Cellular protein synthesis is thereby shut off early after virus infection. Later in the infection, it helps recruit cellular RNA polymerase II to viral replication sites and promotes the nuclear export of viral intronless mRNAs by interacting with mRNAs and host NXF1/TAP. ICP27 binds to NUP62 which may provide facilitated viral mRNA export and may compete with some host cell transport receptors for binding and inhibit cellular nucleocytoplasmic transport pathways. Also stimulates translation of viral transcripts. Repression of host gene expression blocks the cell cycle at the G1 phase and prevents apoptosis. Seems to silence the 3' splice site of the promyelocytic leukemia (PML) intron 7a, thereby switching PML isoforms from PML-II to PML-V. This could be linked to the accelerated mRNA export induced by ICP27 which might not provide sufficient time for PML pre-mRNA to be spliced in the nucleus. The sequence is that of mRNA export factor from Human herpesvirus 1 (strain HFEM) (HHV-1).